We begin with the raw amino-acid sequence, 279 residues long: Pantothenate synthetase (279 aa).

26–33 provides a ligand contact to ATP; it reads MGNLHEGH. The Proton donor role is filled by His-33. Gln-57 provides a ligand contact to (R)-pantoate. Gln-57 serves as a coordination point for beta-alanine. 144 to 147 contributes to the ATP binding site; the sequence is GKKD. Gln-150 contacts (R)-pantoate. ATP contacts are provided by residues Val-173 and 181–184; that span reads LSSR.

This sequence belongs to the pantothenate synthetase family. As to quaternary structure, homodimer.

The protein localises to the cytoplasm. It carries out the reaction (R)-pantoate + beta-alanine + ATP = (R)-pantothenate + AMP + diphosphate + H(+). It participates in cofactor biosynthesis; (R)-pantothenate biosynthesis; (R)-pantothenate from (R)-pantoate and beta-alanine: step 1/1. Its function is as follows. Catalyzes the condensation of pantoate with beta-alanine in an ATP-dependent reaction via a pantoyl-adenylate intermediate. The sequence is that of Pantothenate synthetase from Burkholderia orbicola (strain MC0-3).